A 45-amino-acid polypeptide reads, in one-letter code: Large ribosomal subunit protein bL34 (45 aa).

The interval 1–45 (MTKRTFGGTSRKRKRVSGFRVRMRTHTGRSVIRSRRKKGRSRIAV) is disordered. Residues 10 to 45 (SRKRKRVSGFRVRMRTHTGRSVIRSRRKKGRSRIAV) are compositionally biased toward basic residues.

The protein belongs to the bacterial ribosomal protein bL34 family.

The protein is Large ribosomal subunit protein bL34 of Prochlorococcus marinus (strain SARG / CCMP1375 / SS120).